We begin with the raw amino-acid sequence, 421 residues long: NAD-specific glutamate dehydrogenase (421 aa).

Substrate-binding residues include K70 and K94. The Proton donor role is filled by K106. Positions 191 and 222 each coordinate NAD(+). Substrate is bound at residue S355.

It belongs to the Glu/Leu/Phe/Val dehydrogenases family. In terms of assembly, homohexamer.

It carries out the reaction L-glutamate + NAD(+) + H2O = 2-oxoglutarate + NH4(+) + NADH + H(+). It participates in amino-acid degradation; L-glutamate degradation via hydroxyglutarate pathway; crotonoyl-CoA from L-glutamate: step 1/5. In Peptoniphilus asaccharolyticus (Peptostreptococcus asaccharolyticus), this protein is NAD-specific glutamate dehydrogenase.